The following is a 248-amino-acid chain: Pulmonary surfactant-associated protein A (248 aa).

Residues 1-20 (MSLCSLAFTLFLTVVAGIKC) form the signal peptide. The region spanning 28–100 (GSPGIPGAPG…PGERGLPGFP (73 aa)) is the Collagen-like domain. 4-hydroxyproline occurs at positions 30, 33, 36, 42, 54, 57, 63, 67, 70, and 76. The interval 31 to 99 (GIPGAPGNHG…EPGERGLPGF (69 aa)) is disordered. Residues 42-51 (PGRDGRDGVK) show a composition bias toward basic and acidic residues. The segment covering 54–65 (PGPPGPMGPPGG) has biased composition (pro residues). Positions 69-82 (LPGRDGLPGAPGAP) are enriched in low complexity. Over residues 84-93 (ERGDKGEPGE) the composition is skewed to basic and acidic residues. One can recognise a C-type lectin domain in the interval 133–248 (SVGDKVFSTN…LQYRLAVCEF (116 aa)). Cystine bridges form between C155–C246 and C224–C238. N207 carries N-linked (GlcNAc...) asparagine glycosylation. Ca(2+) is bound by residues E215, R217, N234, and D235.

This sequence belongs to the SFTPA family. In terms of assembly, oligomeric complex of 6 set of homotrimers.

It localises to the secreted. It is found in the extracellular space. The protein resides in the extracellular matrix. Its subcellular location is the surface film. Its function is as follows. In presence of calcium ions, it binds to surfactant phospholipids and contributes to lower the surface tension at the air-liquid interface in the alveoli of the mammalian lung and is essential for normal respiration. Enhances the expression of MYO18A/SP-R210 on alveolar macrophages. This chain is Pulmonary surfactant-associated protein A (Sftpa1), found in Rattus norvegicus (Rat).